A 177-amino-acid polypeptide reads, in one-letter code: Large ribosomal subunit protein uL6 (177 aa).

This sequence belongs to the universal ribosomal protein uL6 family. Part of the 50S ribosomal subunit.

This protein binds to the 23S rRNA, and is important in its secondary structure. It is located near the subunit interface in the base of the L7/L12 stalk, and near the tRNA binding site of the peptidyltransferase center. This Shewanella baltica (strain OS223) protein is Large ribosomal subunit protein uL6.